The primary structure comprises 67 residues: MKAKIHPKYHQAKARCACGNEFEVGSTSENIRVEICSKCHPFYTGAKGRLVDTTGRVDRFKKKYGLS.

Zn(2+) contacts are provided by Cys16, Cys18, Cys36, and Cys39.

It belongs to the bacterial ribosomal protein bL31 family. Type A subfamily. In terms of assembly, part of the 50S ribosomal subunit. Requires Zn(2+) as cofactor.

In terms of biological role, binds the 23S rRNA. This is Large ribosomal subunit protein bL31 from Syntrophomonas wolfei subsp. wolfei (strain DSM 2245B / Goettingen).